Reading from the N-terminus, the 244-residue chain is 1-(5-phosphoribosyl)-5-[(5-phosphoribosylamino)methylideneamino] imidazole-4-carboxamide isomerase (244 aa).

The active-site Proton acceptor is the aspartate 15. Aspartate 136 acts as the Proton donor in catalysis.

It belongs to the HisA/HisF family.

It localises to the cytoplasm. The enzyme catalyses 1-(5-phospho-beta-D-ribosyl)-5-[(5-phospho-beta-D-ribosylamino)methylideneamino]imidazole-4-carboxamide = 5-[(5-phospho-1-deoxy-D-ribulos-1-ylimino)methylamino]-1-(5-phospho-beta-D-ribosyl)imidazole-4-carboxamide. It participates in amino-acid biosynthesis; L-histidine biosynthesis; L-histidine from 5-phospho-alpha-D-ribose 1-diphosphate: step 4/9. The sequence is that of 1-(5-phosphoribosyl)-5-[(5-phosphoribosylamino)methylideneamino] imidazole-4-carboxamide isomerase from Dehalococcoides mccartyi (strain CBDB1).